Reading from the N-terminus, the 339-residue chain is MTEAARPLDREEFARRLDRWLGPGAAGGVVLAVSGGPDSTALMGGAARLPPLVPVMVATVDHGLRPEAAAEAEAVARLAGRLGLPHRILAWTGPKPRTRLQEAARAARYRLLLDLAREQGAAALLTAHTLDDQAETVLMRLCAGSGPAGLGGIEPVRHLGGLALVRPFLDLPKARLVATCAAEGWPFVVDPGNADARFARGRLRRVMPHLAAEGLTAARLARLAERLRRNEAALAAAADAALDALARPGARPGGMMLDARGLAVLPEAVALRVLARAIATVVGGNARPARLERLEDVLFGRLLPAIAAGGRLRCTLGGALLHLSGGSLSLSPEPPRRAG.

34-39 (SGGPDS) lines the ATP pocket.

The protein belongs to the tRNA(Ile)-lysidine synthase family.

It is found in the cytoplasm. It catalyses the reaction cytidine(34) in tRNA(Ile2) + L-lysine + ATP = lysidine(34) in tRNA(Ile2) + AMP + diphosphate + H(+). In terms of biological role, ligates lysine onto the cytidine present at position 34 of the AUA codon-specific tRNA(Ile) that contains the anticodon CAU, in an ATP-dependent manner. Cytidine is converted to lysidine, thus changing the amino acid specificity of the tRNA from methionine to isoleucine. The protein is tRNA(Ile)-lysidine synthase of Methylobacterium nodulans (strain LMG 21967 / CNCM I-2342 / ORS 2060).